A 368-amino-acid polypeptide reads, in one-letter code: 1-deoxy-D-xylulose 5-phosphate reductoisomerase (368 aa).

NADPH contacts are provided by threonine 7, glycine 8, serine 9, isoleucine 10, glycine 31, lysine 32, asparagine 33, and asparagine 113. 1-deoxy-D-xylulose 5-phosphate is bound at residue lysine 114. Residue glutamate 115 coordinates NADPH. Aspartate 133 serves as a coordination point for Mn(2+). Serine 134, glutamate 135, serine 158, and histidine 181 together coordinate 1-deoxy-D-xylulose 5-phosphate. Glutamate 135 is a Mn(2+) binding site. Glycine 187 is a binding site for NADPH. 1-deoxy-D-xylulose 5-phosphate is bound by residues serine 194, asparagine 199, lysine 200, and glutamate 203. Glutamate 203 serves as a coordination point for Mn(2+).

This sequence belongs to the DXR family. Mg(2+) is required as a cofactor. It depends on Mn(2+) as a cofactor.

The enzyme catalyses 2-C-methyl-D-erythritol 4-phosphate + NADP(+) = 1-deoxy-D-xylulose 5-phosphate + NADPH + H(+). It functions in the pathway isoprenoid biosynthesis; isopentenyl diphosphate biosynthesis via DXP pathway; isopentenyl diphosphate from 1-deoxy-D-xylulose 5-phosphate: step 1/6. Functionally, catalyzes the NADPH-dependent rearrangement and reduction of 1-deoxy-D-xylulose-5-phosphate (DXP) to 2-C-methyl-D-erythritol 4-phosphate (MEP). The protein is 1-deoxy-D-xylulose 5-phosphate reductoisomerase of Helicobacter pylori (strain P12).